Here is a 275-residue protein sequence, read N- to C-terminus: Replication protein A 32 kDa subunit (275 aa).

Residues 23-47 form a disordered region; the sequence is MQSPGGFGSPAPTQGEKKSRSRSQQ. The segment at residues 76–150 is a DNA-binding region (OB); sequence VTIVGIVRHA…KSVVAFKIAP (75 aa).

It belongs to the replication factor A protein 2 family. As to quaternary structure, component of the replication protein A complex (RPA/RP-A), a heterotrimeric complex composed of RPA1, RPA2 and RPA3. Differentially phosphorylated throughout the cell cycle, becoming phosphorylated at the G1-S transition and dephosphorylated in late mitosis. Phosphorylation increases upon replication fork stalling.

The protein resides in the nucleus. It is found in the PML body. As part of the heterotrimeric replication protein A complex (RPA/RP-A), binds and stabilizes single-stranded DNA intermediates, that form during DNA replication or upon DNA stress. It prevents their reannealing and in parallel, recruits and activates different proteins and complexes involved in DNA metabolism. Thereby, it plays an essential role both in DNA replication and the cellular response to DNA damage. In Xenopus tropicalis (Western clawed frog), this protein is Replication protein A 32 kDa subunit (rpa2).